A 647-amino-acid polypeptide reads, in one-letter code: Leucine-rich repeat and WD repeat-containing protein 1 (647 aa).

LRR repeat units lie at residues 22–43 (KIRS…PKLL), 48–69 (QLQE…LGLS), 70–91 (HLRV…CQFP), and 92–113 (KLEE…LKVS). The interval 204–267 (RTQVQKANSP…GSPVAGSDGS (64 aa)) is disordered. 5 positions are modified to phosphoserine: Ser-212, Ser-243, Ser-251, Ser-259, and Ser-264. WD repeat units lie at residues 282–335 (HSKN…LHKY), 341–379 (EFFS…LLHV), 383–422 (FCCG…LWDI), 426–472 (NQDY…CWDV), 484–526 (EVEF…LWSW), 542–582 (VVLA…LYDV), and 598–646 (APTQ…IWGR).

It belongs to the LRWD1 family. Integral component of the ORC complex. Directly interacts with CDT1, GMNN and ORC2. Interacts with ORC2 only when non-ubiquitinated; this interaction prevents LRWD1 ubiquitination and degradation. Some of these interactions are regulated in a cell-cycle dependent manner. Interaction with ORC1 occurs predominantly during G1. Association with phosphorylated ORC1 during mitosis is not efficient. Interaction with CDT1 occurs during G1 phase, as well as during mitosis with phosphorylated CDT1. Interaction with GMNN occurs from G1/S to mitosis. Interaction with ORC2 is observed throughout the cell cycle. The stoichiometry of the ORCA/ORC/CDT1/GMNN complex is 1:1:1:2. Interacts with CUL4A and DDB1; this interaction may lead to ubiquitination. Post-translationally, ubiquitinated; undergoes 'Lys-48'-linked polyubiquitination leading to proteasomal degradation. Ubiquitination occurs within the WD repeats at the end of the G1 phase. Ubiquitination may be catalyzed by the CUL4-DDB1 E3 ubiquitin-protein ligase complex and other E3 ligases. Testis-specific. Drastically down-regulated in testis from patients with Sertoli cell-only syndrome (SCOS).

It is found in the nucleus. It localises to the chromosome. Its subcellular location is the centromere. The protein localises to the telomere. The protein resides in the cytoplasm. It is found in the cytoskeleton. It localises to the microtubule organizing center. Its subcellular location is the centrosome. The protein localises to the kinetochore. Its function is as follows. Required for G1/S transition. Recruits and stabilizes the origin recognition complex (ORC) onto chromatin during G1 to establish pre-replication complex (preRC) and to heterochromatic sites in post-replicated cells. Binds a combination of DNA and histone methylation repressive marks on heterochromatin. Binds histone H3 and H4 trimethylation marks H3K9me3, H3K27me3 and H4K20me3 in a cooperative manner with DNA methylation. Required for silencing of major satellite repeats. May be important ORC2, ORC3 and ORC4 stability. In Homo sapiens (Human), this protein is Leucine-rich repeat and WD repeat-containing protein 1 (LRWD1).